The chain runs to 29 residues: Conotoxin pr6a (29 aa).

3 disulfide bridges follow: Cys2/Cys20, Cys9/Cys24, and Cys19/Cys28.

In terms of tissue distribution, expressed by the venom duct.

The protein localises to the secreted. In terms of biological role, intraperitoneal injection into fish (1 nmol) provokes hyperactivity and erratic swimming in various directions after 14 minutes. The protein is Conotoxin pr6a of Conus parius (Cone snail).